Here is a 90-residue protein sequence, read N- to C-terminus: Small ribosomal subunit protein bS16 (90 aa).

Belongs to the bacterial ribosomal protein bS16 family.

This chain is Small ribosomal subunit protein bS16, found in Streptococcus pyogenes serotype M4 (strain MGAS10750).